Reading from the N-terminus, the 751-residue chain is Catalase-peroxidase (751 aa).

Residues 1-21 (MSNESKCPFHQTAGGGTTNRD) form a disordered region. A cross-link (tryptophyl-tyrosyl-methioninium (Trp-Tyr) (with M-270)) is located at residues 90-244 (WHSAGTYRIG…LAAVQMGLIY (155 aa)). The active-site Proton acceptor is H91. Residues 244-270 (YVNPEGPEGNPDPVASGKDIRETFGRM) constitute a cross-link (tryptophyl-tyrosyl-methioninium (Tyr-Met) (with W-90)). Heme b is bound at residue H285. The segment at 365-390 (AHQWRPKEGKGAGTVPDAHDPGKKHA) is disordered.

It belongs to the peroxidase family. Peroxidase/catalase subfamily. As to quaternary structure, homodimer or homotetramer. Heme b serves as cofactor. In terms of processing, formation of the three residue Trp-Tyr-Met cross-link is important for the catalase, but not the peroxidase activity of the enzyme.

It carries out the reaction H2O2 + AH2 = A + 2 H2O. The catalysed reaction is 2 H2O2 = O2 + 2 H2O. Bifunctional enzyme with both catalase and broad-spectrum peroxidase activity. The polypeptide is Catalase-peroxidase (Pseudomonas putida (strain GB-1)).